A 126-amino-acid chain; its full sequence is Aspartate 1-decarboxylase (126 aa).

S25 serves as the catalytic Schiff-base intermediate with substrate; via pyruvic acid. S25 carries the post-translational modification Pyruvic acid (Ser). T57 is a substrate binding site. Catalysis depends on Y58, which acts as the Proton donor. Residue 73–75 participates in substrate binding; sequence GAA.

It belongs to the PanD family. In terms of assembly, heterooctamer of four alpha and four beta subunits. Pyruvate is required as a cofactor. In terms of processing, is synthesized initially as an inactive proenzyme, which is activated by self-cleavage at a specific serine bond to produce a beta-subunit with a hydroxyl group at its C-terminus and an alpha-subunit with a pyruvoyl group at its N-terminus.

It is found in the cytoplasm. The enzyme catalyses L-aspartate + H(+) = beta-alanine + CO2. Its pathway is cofactor biosynthesis; (R)-pantothenate biosynthesis; beta-alanine from L-aspartate: step 1/1. Functionally, catalyzes the pyruvoyl-dependent decarboxylation of aspartate to produce beta-alanine. The sequence is that of Aspartate 1-decarboxylase from Methylobacillus flagellatus (strain ATCC 51484 / DSM 6875 / VKM B-1610 / KT).